Here is a 133-residue protein sequence, read N- to C-terminus: Ribosome-binding factor A (133 aa).

The protein belongs to the RbfA family. In terms of assembly, monomer. Binds 30S ribosomal subunits, but not 50S ribosomal subunits or 70S ribosomes.

The protein resides in the cytoplasm. Functionally, one of several proteins that assist in the late maturation steps of the functional core of the 30S ribosomal subunit. Associates with free 30S ribosomal subunits (but not with 30S subunits that are part of 70S ribosomes or polysomes). Required for efficient processing of 16S rRNA. May interact with the 5'-terminal helix region of 16S rRNA. The polypeptide is Ribosome-binding factor A (Acinetobacter baumannii (strain AB307-0294)).